A 322-amino-acid polypeptide reads, in one-letter code: uncharacterized protein (322 aa).

Low complexity predominate over residues 1 to 17; the sequence is MASMAAAIAASRSAVMS. Positions 1–22 are disordered; sequence MASMAAAIAASRSAVMSGNRPL. The residue at position 2 (alanine 2) is an N-acetylalanine. A Phosphoserine modification is found at serine 37. A disordered region spans residues 81 to 104; it reads AAAADAGDVRDPARFPGLRGPTGQ. Serine 130 bears the Phosphoserine mark. Polar residues-rich tracts occupy residues 142–153 and 161–177; these read QEPSAATVTSDA and QGTQGSKPAQSSRSSSL. Positions 142–301 are disordered; that stretch reads QEPSAATVTS…DDDALFSEPA (160 aa). Serine 176 carries the phosphoserine modification. The segment covering 183 to 203 has biased composition (basic and acidic residues); sequence ARKEEEAPFWKINAERSREGP. Over residues 245-255 the composition is skewed to polar residues; it reads QEQQTLPSVSA.

It localises to the cytoplasm. This is an uncharacterized protein from Mus musculus (Mouse).